The chain runs to 617 residues: Electron transfer flavoprotein-ubiquinone oxidoreductase, mitochondrial (617 aa).

The transit peptide at 1-33 (MMVPLAKLASPAYQCFHALKIKKNYLPLCATRW) directs the protein to the mitochondrion. Residue 75–80 (GAGPAG) participates in FAD binding. Position 96 is an N6-acetyllysine (K96). Residues 109–130 (IGAHTLSGACLDPRAFEELFPD) lie within the membrane without spanning it. An N6-acetyllysine mark is found at K132 and K223. G305 and G306 together coordinate a ubiquinone. N6-acetyllysine is present on K357. Residues 428–447 (IGLHVTEYEDNLKNSWVWKE) lie within the membrane without spanning it. S551 is subject to Phosphoserine. C561, C586, C589, and C592 together coordinate [4Fe-4S] cluster. One can recognise a 4Fe-4S ferredoxin-type domain in the interval 577 to 606 (FRLQINAQNCVHCKTCDIKDPSQNINWVVP).

Monomer. It depends on [4Fe-4S] cluster as a cofactor. FAD is required as a cofactor.

It is found in the mitochondrion inner membrane. It carries out the reaction a ubiquinone + reduced [electron-transfer flavoprotein] = a ubiquinol + oxidized [electron-transfer flavoprotein] + H(+). Functionally, accepts electrons from ETF and reduces ubiquinone. This is Electron transfer flavoprotein-ubiquinone oxidoreductase, mitochondrial (ETFDH) from Sus scrofa (Pig).